A 232-amino-acid chain; its full sequence is Aquaporin Z (232 aa).

The next 2 helical transmembrane spans lie at 8-28 (AFGTFWLVLGGCGSAVLAAGF) and 33-53 (IGLLGVALAFGLTVLTMAFAI). The short motif at 62 to 64 (NPA) is the NPA 1 element. A run of 3 helical transmembrane segments spans residues 84–104 (IIAQVIGGLIAGGILYVIATG), 130–150 (MLAALVSEIVMTMMFLIVIMG), and 159–179 (GFAPIAIGLCLTLIHLISIPV). An NPA 2 motif is present at residues 185-187 (NPA). The helical transmembrane segment at 201 to 221 (VSQLWLFWVAPIVGGVLGAVI) threads the bilayer.

This sequence belongs to the MIP/aquaporin (TC 1.A.8) family. As to quaternary structure, homotetramer.

The protein localises to the cell inner membrane. The catalysed reaction is H2O(in) = H2O(out). Its function is as follows. Channel that permits osmotically driven movement of water in both directions. It is involved in the osmoregulation and in the maintenance of cell turgor during volume expansion in rapidly growing cells. It mediates rapid entry or exit of water in response to abrupt changes in osmolarity. This Vibrio parahaemolyticus serotype O3:K6 (strain RIMD 2210633) protein is Aquaporin Z.